The primary structure comprises 354 residues: Uroporphyrinogen decarboxylase (354 aa).

Substrate is bound by residues R28–R32, D78, Y155, S210, and H325.

It belongs to the uroporphyrinogen decarboxylase family. As to quaternary structure, homodimer.

It is found in the cytoplasm. It carries out the reaction uroporphyrinogen III + 4 H(+) = coproporphyrinogen III + 4 CO2. Its pathway is porphyrin-containing compound metabolism; protoporphyrin-IX biosynthesis; coproporphyrinogen-III from 5-aminolevulinate: step 4/4. In terms of biological role, catalyzes the decarboxylation of four acetate groups of uroporphyrinogen-III to yield coproporphyrinogen-III. The chain is Uroporphyrinogen decarboxylase from Trichodesmium erythraeum (strain IMS101).